The primary structure comprises 303 residues: UDP-3-O-acyl-N-acetylglucosamine deacetylase (303 aa).

Zn(2+) contacts are provided by histidine 78, histidine 237, and aspartate 241. Histidine 264 serves as the catalytic Proton donor.

It belongs to the LpxC family. It depends on Zn(2+) as a cofactor.

It carries out the reaction a UDP-3-O-[(3R)-3-hydroxyacyl]-N-acetyl-alpha-D-glucosamine + H2O = a UDP-3-O-[(3R)-3-hydroxyacyl]-alpha-D-glucosamine + acetate. It functions in the pathway glycolipid biosynthesis; lipid IV(A) biosynthesis; lipid IV(A) from (3R)-3-hydroxytetradecanoyl-[acyl-carrier-protein] and UDP-N-acetyl-alpha-D-glucosamine: step 2/6. Its function is as follows. Catalyzes the hydrolysis of UDP-3-O-myristoyl-N-acetylglucosamine to form UDP-3-O-myristoylglucosamine and acetate, the committed step in lipid A biosynthesis. The polypeptide is UDP-3-O-acyl-N-acetylglucosamine deacetylase (Coxiella burnetii (strain CbuK_Q154) (Coxiella burnetii (strain Q154))).